A 217-amino-acid polypeptide reads, in one-letter code: Outer-membrane lipoprotein LolB (217 aa).

Positions 1–20 are cleaved as a signal peptide; sequence MSRAVRTLALGGLVLVGLSA. C21 carries the N-palmitoyl cysteine lipid modification. Residue C21 is the site of S-diacylglycerol cysteine attachment.

This sequence belongs to the LolB family. As to quaternary structure, monomer.

It localises to the cell outer membrane. Functionally, plays a critical role in the incorporation of lipoproteins in the outer membrane after they are released by the LolA protein. The sequence is that of Outer-membrane lipoprotein LolB from Xanthomonas euvesicatoria pv. vesicatoria (strain 85-10) (Xanthomonas campestris pv. vesicatoria).